The chain runs to 140 residues: Lysozyme D (140 aa).

Positions 1 to 18 (MKAFIVLVALACAAPAFG) are cleaved as a signal peptide. The C-type lysozyme domain maps to 19-140 (RTMDRCSLAR…GWLPSIDDCF (122 aa)). Cystine bridges form between C24–C139, C45–C129, C80–C96, and C92–C110. Active-site residues include E50 and D68.

Belongs to the glycosyl hydrolase 22 family. As to expression, found in the midgut.

The enzyme catalyses Hydrolysis of (1-&gt;4)-beta-linkages between N-acetylmuramic acid and N-acetyl-D-glucosamine residues in a peptidoglycan and between N-acetyl-D-glucosamine residues in chitodextrins.. Functionally, unlikely to play an active role in the humoral immune defense. May have a function in the digestion of bacteria in the food. The protein is Lysozyme D (LysD) of Drosophila melanogaster (Fruit fly).